A 92-amino-acid chain; its full sequence is Antifungal protein B (92 aa).

A signal peptide spans 1–18 (MQITSIAIVFFAAMGAVA). A propeptide spanning residues 19-34 (NPIARESDDLDARDVQ) is cleaved from the precursor. 3 cysteine pairs are disulfide-bonded: cysteine 42/cysteine 70, cysteine 49/cysteine 77, and cysteine 62/cysteine 88.

The protein resides in the secreted. The protein localises to the host cytoplasm. Antifungal protein that acts as an inhibitor of growth of human pathogenic molds and yeasts. Is active against the model organism Neurospora crassa, the opportunistic human pathogens Aspergillus fumigatus, Trichophyton rubrum, and Aspergillus terreus. Provokes a reduction of the incidence of infections caused by Penicillium digitatum and Penicillium italicum in oranges and by Penicillium expansum in apples. Low doses of pafB have self-inhibition activity. Also shows activity against the model yeast Saccaromyces cerevisiae and the opportunistic human pathogen Candida albicans. No antibacterial activity is observed on the Gram-negative Escherichia coli and the Gram-positive Bacillus subtilis. Finally, also shows anti-viral activity in a model of HCoV 229E infected L132 cells. The chain is Antifungal protein B from Penicillium chrysogenum (Penicillium notatum).